Reading from the N-terminus, the 159-residue chain is Protein Smg homolog (159 aa).

The protein belongs to the Smg family.

This chain is Protein Smg homolog, found in Vibrio vulnificus (strain CMCP6).